A 100-amino-acid chain; its full sequence is Small ribosomal subunit protein uS14c (100 aa).

It belongs to the universal ribosomal protein uS14 family. In terms of assembly, part of the 30S ribosomal subunit.

Its subcellular location is the plastid. It is found in the chloroplast. Its function is as follows. Binds 16S rRNA, required for the assembly of 30S particles. The chain is Small ribosomal subunit protein uS14c from Lobularia maritima (Sweet alyssum).